A 155-amino-acid polypeptide reads, in one-letter code: Small ribosomal subunit protein uS7c (155 aa).

Belongs to the universal ribosomal protein uS7 family. As to quaternary structure, part of the 30S ribosomal subunit.

The protein resides in the plastid. The protein localises to the chloroplast. In terms of biological role, one of the primary rRNA binding proteins, it binds directly to 16S rRNA where it nucleates assembly of the head domain of the 30S subunit. In Pinus koraiensis (Korean pine), this protein is Small ribosomal subunit protein uS7c (rps7).